We begin with the raw amino-acid sequence, 325 residues long: GMP reductase (325 aa).

C173 acts as the Thioimidate intermediate in catalysis. 202–225 provides a ligand contact to NADP(+); that stretch reads IIADGGIRSHGDIAKSVRFGATMV.

It belongs to the IMPDH/GMPR family. GuaC type 2 subfamily.

The catalysed reaction is IMP + NH4(+) + NADP(+) = GMP + NADPH + 2 H(+). In terms of biological role, catalyzes the irreversible NADPH-dependent deamination of GMP to IMP. It functions in the conversion of nucleobase, nucleoside and nucleotide derivatives of G to A nucleotides, and in maintaining the intracellular balance of A and G nucleotides. The sequence is that of GMP reductase from Delftia acidovorans (strain DSM 14801 / SPH-1).